Here is a 346-residue protein sequence, read N- to C-terminus: Flap endonuclease 1 (346 aa).

Positions 1-102 are N-domain; the sequence is MGVTELGKLI…AEIEERRKVK (102 aa). Residues aspartate 31, aspartate 84, glutamate 156, glutamate 158, aspartate 177, aspartate 179, and aspartate 239 each coordinate Mg(2+). Residues 120 to 261 form an I-domain region; that stretch reads DVAKYMKRAV…KALKLVWEFG (142 aa).

Belongs to the XPG/RAD2 endonuclease family. FEN1 subfamily. Interacts with PCNA. PCNA stimulates the nuclease activity without altering cleavage specificity. The cofactor is Mg(2+).

In terms of biological role, structure-specific nuclease with 5'-flap endonuclease and 5'-3' exonuclease activities involved in DNA replication and repair. During DNA replication, cleaves the 5'-overhanging flap structure that is generated by displacement synthesis when DNA polymerase encounters the 5'-end of a downstream Okazaki fragment. Binds the unpaired 3'-DNA end and kinks the DNA to facilitate 5' cleavage specificity. Cleaves one nucleotide into the double-stranded DNA from the junction in flap DNA, leaving a nick for ligation. Also involved in the base excision repair (BER) pathway. Acts as a genome stabilization factor that prevents flaps from equilibrating into structures that lead to duplications and deletions. Also possesses 5'-3' exonuclease activity on nicked or gapped double-stranded DNA. The chain is Flap endonuclease 1 from Pyrobaculum islandicum (strain DSM 4184 / JCM 9189 / GEO3).